Reading from the N-terminus, the 128-residue chain is uncharacterized protein (128 aa).

This is an uncharacterized protein from Methanocaldococcus jannaschii (strain ATCC 43067 / DSM 2661 / JAL-1 / JCM 10045 / NBRC 100440) (Methanococcus jannaschii).